A 210-amino-acid polypeptide reads, in one-letter code: Large ribosomal subunit protein uL3 (210 aa).

Over residues 132 to 144 (GPMKHGSKYHRRP) the composition is skewed to basic residues. The segment at 132–152 (GPMKHGSKYHRRPGSAGAKGP) is disordered.

Belongs to the universal ribosomal protein uL3 family. In terms of assembly, part of the 50S ribosomal subunit. Forms a cluster with proteins L14 and L19.

In terms of biological role, one of the primary rRNA binding proteins, it binds directly near the 3'-end of the 23S rRNA, where it nucleates assembly of the 50S subunit. In Heliobacterium modesticaldum (strain ATCC 51547 / Ice1), this protein is Large ribosomal subunit protein uL3.